Consider the following 1015-residue polypeptide: Fibronectin-binding protein A (1015 aa).

Positions M1 to A36 are cleaved as a signal peptide. The YSIRK-G/S signaling motif signature appears at Y7–S18. Positions A37–N512 are ligand-binding A region. Polar residues predominate over residues S75–T92. The segment at S75 to S199 is disordered. Positions T112–V126 are enriched in basic and acidic residues. Residues T129–Q139 show a composition bias toward polar residues. A compositionally biased stretch (basic and acidic residues) spans D179–T193. The tract at residues G194–N512 is fibrinogen/elastin/tropoelastin-binding. Residues G513–T873 are fibronectin-binding. The stretch at E546–I575 is one B-1 repeat. A 2 X approximate tandem repeats region spans residues E546–S605. Residues E576–S605 form a B-2 repeat. Disordered stretches follow at residues G596–H623, L741–D815, E828–V953, and V966–M992. A D-1 repeat occupies G746–Q783. Residues G746–P875 form a 4 X approximate tandem repeats region. Polar residues predominate over residues P780 to S791. The D-2 repeat unit spans residues G784–H821. One copy of the D-3 repeat lies at G822–S860. Residues E828–P839 show a composition bias toward basic and acidic residues. The D-4; truncated repeat unit spans residues G861–P875. Pro residues predominate over residues P875–P935. WR repeat units follow at residues P876–T889, P890–T903, P904–T917, P918–K931, and P932–K945. The tract at residues P876–K945 is 5 X tandem repeats, Pro-rich (WR). Positions L979 to G983 match the LPXTG sorting signal motif. T982 carries the post-translational modification Pentaglycyl murein peptidoglycan amidated threonine. The propeptide at G983–A1015 is removed by sortase.

It is found in the secreted. The protein localises to the cell wall. In terms of biological role, promotes bacterial attachment to multiple substrates, such as fibronectin (Fn), fibrinogen (Fg), elastin peptides and tropoelastin. This confers to S.aureus the ability to invade endothelial cells. Promotes adherence to and aggregation of activated platelets. The sequence is that of Fibronectin-binding protein A (fnbA) from Staphylococcus aureus (strain MSSA476).